We begin with the raw amino-acid sequence, 78 residues long: Ferredoxin (78 aa).

4Fe-4S ferredoxin-type domains follow at residues F2 to P29 and D30 to F59. Positions 8 and 16 each coordinate [3Fe-4S] cluster. C20, C39, C42, and C45 together coordinate [4Fe-4S] cluster. C49 provides a ligand contact to [3Fe-4S] cluster.

It depends on [3Fe-4S] cluster as a cofactor. [4Fe-4S] cluster serves as cofactor.

Functionally, ferredoxins are iron-sulfur proteins that transfer electrons in a wide variety of metabolic reactions. The sequence is that of Ferredoxin from Alicyclobacillus acidocaldarius subsp. acidocaldarius (Bacillus acidocaldarius).